A 689-amino-acid chain; its full sequence is Glycine--tRNA ligase beta subunit (689 aa).

It belongs to the class-II aminoacyl-tRNA synthetase family. Tetramer of two alpha and two beta subunits.

It is found in the cytoplasm. It carries out the reaction tRNA(Gly) + glycine + ATP = glycyl-tRNA(Gly) + AMP + diphosphate. This is Glycine--tRNA ligase beta subunit (glyS) from Coxiella burnetii (strain RSA 493 / Nine Mile phase I).